The primary structure comprises 264 residues: Hydroxyethylthiazole kinase (264 aa).

A substrate-binding site is contributed by methionine 40. ATP-binding residues include lysine 116 and threonine 161. Glycine 188 contributes to the substrate binding site.

Belongs to the Thz kinase family. It depends on Mg(2+) as a cofactor.

It carries out the reaction 5-(2-hydroxyethyl)-4-methylthiazole + ATP = 4-methyl-5-(2-phosphooxyethyl)-thiazole + ADP + H(+). It functions in the pathway cofactor biosynthesis; thiamine diphosphate biosynthesis; 4-methyl-5-(2-phosphoethyl)-thiazole from 5-(2-hydroxyethyl)-4-methylthiazole: step 1/1. In terms of biological role, catalyzes the phosphorylation of the hydroxyl group of 4-methyl-5-beta-hydroxyethylthiazole (THZ). The chain is Hydroxyethylthiazole kinase from Staphylococcus carnosus (strain TM300).